A 139-amino-acid polypeptide reads, in one-letter code: HTH-type transcriptional repressor Mb2911 (139 aa).

One can recognise an HTH marR-type domain in the interval 6–138; the sequence is DAPLGYLLYR…FKRMLEKLGS (133 aa).

Homodimer.

Functionally, represses expression of the HQNO methyltransferase htm gene by binding to its promoter region. This is HTH-type transcriptional repressor Mb2911 from Mycobacterium bovis (strain ATCC BAA-935 / AF2122/97).